Consider the following 160-residue polypeptide: Ureidoglycolate lyase (160 aa).

Belongs to the ureidoglycolate lyase family. In terms of assembly, homodimer. Ni(2+) is required as a cofactor.

It carries out the reaction (S)-ureidoglycolate = urea + glyoxylate. It participates in nitrogen metabolism; (S)-allantoin degradation. In terms of biological role, catalyzes the catabolism of the allantoin degradation intermediate (S)-ureidoglycolate, generating urea and glyoxylate. Involved in the anaerobic utilization of allantoin as sole nitrogen source. Reinforces the induction of genes involved in the degradation of allantoin and glyoxylate by producing glyoxylate. This is Ureidoglycolate lyase from Escherichia coli O127:H6 (strain E2348/69 / EPEC).